Consider the following 115-residue polypeptide: Secapin (115 aa).

The first 24 residues, 1 to 24, serve as a signal peptide directing secretion; the sequence is MRFQVYILHLCFFILVVLTYLSQG. Positions 25–90 are excised as a propeptide; sequence QSYTTTTTTS…STENFDITNR (66 aa). The cysteines at positions 99 and 110 are disulfide-linked.

It belongs to the secapin family. As to expression, expressed in the epidermis, fat body and venom gland.

The protein resides in the secreted. Functionally, serine protease inhibitor which exhibits antifibrinolytic, antielastolytic and antimicrobial activities. Displays antimicrobial activity against bacteria and fungi. Likely functions in the innate immune response to microbial infection and possibly in the venom, as an antifibrinolytic agent. The recombinant form inhibits trypsin (IC(50)=80.02 nM, Ki=127.25 nM), chymotrypsin (IC(50)=393.78 nM, Ki=432.59 nM), the microbial serine proteases subtilisin A (IC(50)=379.20 nM, Ki=492.77 nM) and proteinase K (IC(50)=189.43 nM, Ki=271.76 nM), plasmin (IC(50)=457.98 nM, Ki=502.91 nM), human elastase (IC(50)=347.81 nM, Ki=469.90 nM) and porcine elastase (IC(50)=94.70 nM, Ki=125.62 nM). Does not inhibit thrombin. Binds to human plasmin and inhibits the plasmin-mediated degradation of fibrin to fibrin degradation products, indicating its role as an anti-fibrinolytic agent. Also binds to bacterial and fungal surfaces. Exhibits antimicrobial activity against the Gram-positive bacteria B.thuringiensis (MIC=4.21 uM) and P.larvae (MIC=11.13 uM), the Gram-negative bacteria E.coli (MIC=6.50 uM) and the multidrug-resistant A.baumannii (MIC=5 ug/ml, MBC=10 ug/ml), as well as against the fungus B.bassiana (IC(50)=2.57 uM). The synthetic peptide also exhibits antimicrobial activity against the Gram-positive bacterium P.larvae (MIC=41.12 uM), the Gram-negative bacterium P.aeruginosa (MIC=65.75 uM), and the fungus B.bassiana (IC(50)=44.27 uM). Is also able to prevent A.baumannii biofilm formation and eliminate established A.baumannii biofilms. In vitro, does not induce an inflammatory response and has no cytotoxic activity against mammalian cells. The polypeptide is Secapin (Apis cerana (Indian honeybee)).